Here is a 347-residue protein sequence, read N- to C-terminus: Protein RecA (347 aa).

64-71 serves as a coordination point for ATP; sequence GPESSGKT.

The protein belongs to the RecA family.

It is found in the cytoplasm. In terms of biological role, can catalyze the hydrolysis of ATP in the presence of single-stranded DNA, the ATP-dependent uptake of single-stranded DNA by duplex DNA, and the ATP-dependent hybridization of homologous single-stranded DNAs. It interacts with LexA causing its activation and leading to its autocatalytic cleavage. The chain is Protein RecA from Bacillus velezensis (strain DSM 23117 / BGSC 10A6 / LMG 26770 / FZB42) (Bacillus amyloliquefaciens subsp. plantarum).